A 305-amino-acid polypeptide reads, in one-letter code: Ribosomal RNA small subunit methyltransferase H (305 aa).

S-adenosyl-L-methionine is bound by residues 33-35, Asp-52, Asp-97, and Gln-104; that span reads GGH.

Belongs to the methyltransferase superfamily. RsmH family.

The protein resides in the cytoplasm. The catalysed reaction is cytidine(1402) in 16S rRNA + S-adenosyl-L-methionine = N(4)-methylcytidine(1402) in 16S rRNA + S-adenosyl-L-homocysteine + H(+). Functionally, specifically methylates the N4 position of cytidine in position 1402 (C1402) of 16S rRNA. The chain is Ribosomal RNA small subunit methyltransferase H from Campylobacter lari (strain RM2100 / D67 / ATCC BAA-1060).